A 2377-amino-acid polypeptide reads, in one-letter code: Serine/threonine-protein kinase WNK1 (2377 aa).

Disordered regions lie at residues 1 to 79 (MSDG…RFFR) and 93 to 203 (LPGL…QQDD). Residues T17 and T58 each carry the phosphothreonine modification. The segment covering 48–64 (RTEEYRRRRHTMDKDSR) has biased composition (basic and acidic residues). Composition is skewed to low complexity over residues 101–111 (PQPSVPAVVPQ) and 127–141 (VASQ…AASP). The segment covering 149-158 (SATTTVPSST) has biased composition (polar residues). 2 positions are modified to phosphoserine: S165 and S172. Residues 221–479 (LKFDIEIGRG…IKDLLNHAFF (259 aa)) form the Protein kinase domain. Position 231 (S231) interacts with ATP. Positions 283 and 299 each coordinate chloride. Residues 301–304 (TELM) and K351 contribute to the ATP site. D368 functions as the Proton acceptor in the catalytic mechanism. Chloride-binding residues include L369 and L371. Phosphoserine; by autocatalysis occurs at positions 378 and 382. Residues 488-555 (ELAEEDDGEK…VCEGDHKTMA (68 aa)) form an autoinhibitory domain region. A compositionally biased stretch (basic and acidic residues) spans 573 to 588 (QLVREEQEKRKQEESS). Disordered stretches follow at residues 573–782 (QLVR…SAGT) and 1013–1114 (PAVS…SRPK). Composition is skewed to polar residues over residues 593-628 (NEQQ…STQV), 638-705 (HQQL…QSQP), and 713-733 (SMAQ…VLSS). The segment at 629–639 (EPEEPEADQHQ) is interaction with KLHL3. The span at 734 to 746 (QPIQHPQQQGIQP) shows a compositional bias: low complexity. Positions 747 to 782 (TVPSQQAVQYSLPQAASSSEGTTAQPVSQPQVSAGT) are enriched in polar residues. Low complexity predominate over residues 1018 to 1028 (TQQPPTTSSQQ). Over residues 1029–1038 (AVLESTQGVS) the composition is skewed to polar residues. The segment covering 1042–1058 (PPEQTPITQSQPTQPVP) has biased composition (low complexity). The span at 1075–1085 (SDGNENAPSSS) shows a compositional bias: polar residues. A compositionally biased stretch (basic residues) spans 1093 to 1114 (TKRHYRKSVRSRSRHEKTSRPK). Positions 1252–1255 (RFIV) match the RFXV motif 1 motif. S1256 carries the post-translational modification Phosphoserine. Disordered stretches follow at residues 1726 to 1760 (GQVS…TVVP) and 1818 to 1847 (TMSS…SSGA). A compositionally biased stretch (low complexity) spans 1738–1748 (PVGTATGVKPG). T1843 is subject to Phosphothreonine. An RFXV motif 2 motif is present at residues 1854-1857 (RFQV). The tract at residues 1860–1945 (TMDDAQKERK…TKVGRFQVTT (86 aa)) is disordered. A compositionally biased stretch (basic and acidic residues) spans 1863 to 1879 (DAQKERKNRSEDTKSVH). Low complexity predominate over residues 1882-1900 (SSTSESSVLSSSSPESTLV). Short sequence motifs (RFXV motif) lie at residues 1940 to 1943 (RFQV) and 1952 to 1955 (RFSV). Residues 1959-1969 (EDKVTELKKEG) show a composition bias toward basic and acidic residues. Disordered regions lie at residues 1959-1984 (EDKV…QTVI), 1989-2008 (PKKE…PSSD), 2015-2064 (SRGT…DIED), 2107-2191 (VIIP…NLYS), and 2203-2239 (SLSA…SRKG). S1973 carries the post-translational modification Phosphoserine. The span at 1989 to 1998 (PKKEKPELAE) shows a compositional bias: basic and acidic residues. 5 positions are modified to phosphoserine: S2006, S2007, S2022, S2024, and S2027. The segment covering 2035 to 2057 (SLPVQNLSQSLSNSFNSSYMSSD) has biased composition (low complexity). S2116 is subject to Phosphoserine. Residues 2117–2129 (GRRRRPTKSKGSK) show a composition bias toward basic residues. Residues 2130-2140 (SSRSSSLGNKS) are compositionally biased toward low complexity. The span at 2141–2191 (PQLSGNLSGQSGTSVLHPQQTLHPAGNTPETGHNQLLQPLKPSPSSDNLYS) shows a compositional bias: polar residues. Over residues 2208–2232 (GQGTSSTNTVGGTVSSQAAQAQPPA) the composition is skewed to low complexity. Residues 2236–2256 (SRKGTFTDDLHKLVDNWARDA) form an amphipathic alpha-helix region. 2 positions are modified to phosphoserine: S2265 and S2281. The segment at 2325-2344 (PAPFGTQWSGTGGPAPQPLG) is disordered. Residues S2365 and S2367 each carry the phosphoserine modification.

This sequence belongs to the protein kinase superfamily. Ser/Thr protein kinase family. WNK subfamily. In terms of assembly, interacts with WNK3. Interacts with WNK4; inhibiting the activity of WNK4. Interacts with SGK1; promoting its activation. Associates with the mTORC2 complex. Interacts with UVRAG. Interacts with isoform 1; inhibiting isoform 1 activity. Mg(2+) serves as cofactor. Autophosphorylated at Ser-378 and Ser-382, promoting its activity. Autophosphorylation at Ser-382 is inhibited by intracellular calcium. Phosphorylation at Thr-58 increases ability to activate SGK1. Post-translationally, ubiquitinated by the BCR(KLHL3) complex, leading to its degradation. Also ubiquitinated by the BCR(KLHL2) complex. In terms of processing, may be O-glycosylated. As to expression, widely expressed in both adult and embryonic tissue, with highest levels observed in the testis and lower levels in heart, lung, kidney, placenta, brain and skeletal muscle. Expressed in pancreatic duct. Two isoforms are expressed in heart, a single shorter isoform in the kidney. Locates to the distal convoluted tubule, the medullary collecting duct and the cortical collecting duct of the kidney. Restricted to the nervous system, expressed preferentially in sensory neurons than in motor neurons and in general more abundant in axons than in cell bodies (at protein level). In the DRG, predominantly expressed in the satellite cells that envelop sensory neurons, but low expression also observed in the cell bodies of neurons (at protein level). In the sciatic nerve, expressed in the Schwann cells that surround axons and in a mosaic distribution of axons (at protein level). In the spinal cord, expressed in superficial layers (LI and LII), as well as in the fibers of the Lissauer tract (at protein level). Also detected in the axon fibers of dorsolateral funiculus and lateral funiculus (at protein level).

It localises to the cytoplasm. It is found in the nucleus. The protein localises to the cytoskeleton. The protein resides in the spindle. The catalysed reaction is L-seryl-[protein] + ATP = O-phospho-L-seryl-[protein] + ADP + H(+). It carries out the reaction L-threonyl-[protein] + ATP = O-phospho-L-threonyl-[protein] + ADP + H(+). With respect to regulation, activated in response to hyperosmotic stress: cell shrinkage promotes formation of a membraneless compartment that concentrates WNK1 with its substrates, OXSR1/OSR1 and STK39/SPAK. Activation requires autophosphorylation of Ser-382 and, to a lower extent, Ser-378. Autophosphorylation and subsequent activation is inhibited by increases in intracellular ionic strength: Cl(-) potently inhibits WNK1 kinase activity via direct binding. Also inhibited by K(+) ions. Functionally, serine/threonine-protein kinase component of the WNK1-SPAK/OSR1 kinase cascade, which acts as a key regulator of blood pressure and regulatory volume increase by promoting ion influx. WNK1 mediates regulatory volume increase in response to hyperosmotic stress by acting as a molecular crowding sensor, which senses cell shrinkage and mediates formation of a membraneless compartment by undergoing liquid-liquid phase separation. The membraneless compartment concentrates WNK1 with its substrates, OXSR1/OSR1 and STK39/SPAK, promoting WNK1-dependent phosphorylation and activation of downstream kinases OXSR1/OSR1 and STK39/SPAK. Following activation, OXSR1/OSR1 and STK39/SPAK catalyze phosphorylation of ion cotransporters SLC12A1/NKCC2, SLC12A2/NKCC1, SLC12A5/KCC2 and SLC12A6/KCC3, regulating their activity. Phosphorylation of Na-K-Cl cotransporters SLC12A2/NKCC1 and SLC12A2/NKCC1 promote their activation and ion influx; simultaneously, phosphorylation of K-Cl cotransporters SLC12A5/KCC2 and SLC12A6/KCC3 inhibit their activity, blocking ion efflux. Also acts as a regulator of angiogenesis in endothelial cells. Also acts independently of the WNK1-SPAK/OSR1 kinase cascade by catalyzing phosphorylation of other substrates, such as SYT2, PCF11 and NEDD4L. Mediates phosphorylation of SYT2, regulating SYT2 association with phospholipids and membrane-binding. Regulates mRNA export in the nucleus by mediating phosphorylation of PCF11, thereby decreasing the association between PCF11 and POLR2A/RNA polymerase II and promoting mRNA export to the cytoplasm. Acts as a negative regulator of autophagy. Required for the abscission step during mitosis, independently of the WNK1-SPAK/OSR1 kinase cascade. WNK1 may also play a role in actin cytoskeletal reorganization. Also acts as a scaffold protein independently of its protein kinase activity: negatively regulates cell membrane localization of various transporters and channels, such as SLC4A4, SLC26A6, SLC26A9, TRPV4 and CFTR. Involved in the regulation of epithelial Na(+) channel (ENaC) by promoting activation of SGK1 in a kinase-independent manner: probably acts as a scaffold protein that promotes the recruitment of SGK1 to the mTORC2 complex in response to chloride, leading to mTORC2-dependent phosphorylation and activation of SGK1. Acts as an assembly factor for the ER membrane protein complex independently of its protein kinase activity: associates with EMC2 in the cytoplasm via its amphipathic alpha-helix, and prevents EMC2 ubiquitination and subsequent degradation, thereby promoting EMC2 stabilization. In terms of biological role, kinase-defective isoform specifically expressed in kidney, which acts as a dominant-negative regulator of the longer isoform 1. Does not directly inhibit WNK4 and has no direct effect on sodium and chloride ion transport. Down-regulates sodium-chloride cotransporter activity indirectly by inhibiting isoform 1, it associates with isoform 1 and attenuates its kinase activity. In kidney, may play an important role regulating sodium and potassium balance. The protein is Serine/threonine-protein kinase WNK1 of Mus musculus (Mouse).